The following is a 420-amino-acid chain: Glucose-1-phosphate adenylyltransferase (420 aa).

Residues Tyr107, Gly172, 187–188 (EK), and Ser205 each bind alpha-D-glucose 1-phosphate.

The protein belongs to the bacterial/plant glucose-1-phosphate adenylyltransferase family. Homotetramer.

The enzyme catalyses alpha-D-glucose 1-phosphate + ATP + H(+) = ADP-alpha-D-glucose + diphosphate. Its pathway is glycan biosynthesis; glycogen biosynthesis. In terms of biological role, involved in the biosynthesis of ADP-glucose, a building block required for the elongation reactions to produce glycogen. Catalyzes the reaction between ATP and alpha-D-glucose 1-phosphate (G1P) to produce pyrophosphate and ADP-Glc. In Rhizobium leguminosarum bv. trifolii (strain WSM2304), this protein is Glucose-1-phosphate adenylyltransferase.